A 163-amino-acid polypeptide reads, in one-letter code: K88 minor fimbrial subunit FaeF (163 aa).

Positions 1–22 (MKKTMMAAALVLSALSIQSALA) are cleaved as a signal peptide.

The protein localises to the fimbrium. Functionally, K88 minor fimbrial subunit, plays an essential role in the biogenesis of the K88 fimbriae. required at some step in the initiation and/or elongation of the K88 fimbriae. The polypeptide is K88 minor fimbrial subunit FaeF (faeF) (Escherichia coli).